Consider the following 726-residue polypeptide: uncharacterized protein (726 aa).

Residues methionine 10–asparagine 135 form the Thioredoxin domain. 2 disordered regions span residues histidine 133–aspartate 153 and valine 227–glycine 280. Over residues threonine 138–aspartate 153 the composition is skewed to acidic residues. Residues isoleucine 675–serine 695 traverse the membrane as a helical segment. Position 708 is a phosphoserine (serine 708).

The protein resides in the membrane. This is an uncharacterized protein from Schizosaccharomyces pombe (strain 972 / ATCC 24843) (Fission yeast).